The primary structure comprises 266 residues: 22 kDa alpha-zein 4 (266 aa).

Residues 1–21 form the signal peptide; sequence MATKILSLLALLALFASATNA.

It belongs to the zein family. In terms of assembly, interacts with OP10 (via N-terminus). As to expression, expressed in endosperm, mainly in the peripheral regions.

In terms of biological role, zeins are major seed storage proteins. This Zea mays (Maize) protein is 22 kDa alpha-zein 4.